Consider the following 375-residue polypeptide: 4,4'-diaponeurosporenoate glycosyltransferase (375 aa).

The next 4 helical transmembrane spans lie at 3–23, 164–184, 277–297, and 330–350; these read WLSR…ALIF, FYEG…NVFS, IMTA…GLCL, and FSNL…KIFI.

This sequence belongs to the glycosyltransferase 2 family. CrtQ subfamily.

It is found in the cell membrane. It functions in the pathway carotenoid biosynthesis; staphyloxanthin biosynthesis; staphyloxanthin from farnesyl diphosphate: step 4/5. In terms of biological role, catalyzes the glycosylation of 4,4'-diaponeurosporenoate, i.e. the esterification of glucose at the C1'' position with the carboxyl group of 4,4'-diaponeurosporenic acid, to form glycosyl-4,4'-diaponeurosporenoate. This is a step in the biosynthesis of staphyloxanthin, an orange pigment present in most staphylococci strains. The polypeptide is 4,4'-diaponeurosporenoate glycosyltransferase (crtQ) (Staphylococcus aureus (strain Mu50 / ATCC 700699)).